A 132-amino-acid chain; its full sequence is Ribosome-binding factor A (132 aa).

It belongs to the RbfA family. As to quaternary structure, monomer. Binds 30S ribosomal subunits, but not 50S ribosomal subunits or 70S ribosomes.

It localises to the cytoplasm. Its function is as follows. One of several proteins that assist in the late maturation steps of the functional core of the 30S ribosomal subunit. Associates with free 30S ribosomal subunits (but not with 30S subunits that are part of 70S ribosomes or polysomes). Required for efficient processing of 16S rRNA. May interact with the 5'-terminal helix region of 16S rRNA. The chain is Ribosome-binding factor A from Burkholderia cenocepacia (strain ATCC BAA-245 / DSM 16553 / LMG 16656 / NCTC 13227 / J2315 / CF5610) (Burkholderia cepacia (strain J2315)).